A 445-amino-acid polypeptide reads, in one-letter code: FAS-associated factor 2 (445 aa).

N-acetylalanine is present on Ala2. One can recognise a UBA domain in the interval 12–48 (EQTEKLLQFQDLTGIESMDQCRHTLEQHNWNIEAAVQ). Lys167 is subject to N6-acetyllysine. The stretch at 275–350 (SERLEREERN…EEKERKLECL (76 aa)) forms a coiled coil. The tract at residues 299–361 (ASLRADQEKE…PEPSPDDPES (63 aa)) is disordered. The segment covering 303-348 (ADQEKERKKREERERKRRKEEEVQQQKLAEERRRQNLQEEKERKLE) has biased composition (basic and acidic residues). One can recognise a UBX domain in the interval 357–439 (DDPESVKIIF…GLSHTEVLFV (83 aa)).

In terms of assembly, identified in a complex that contains SEL1L, OS9, FAF2/UBXD8, UBE2J1/UBC6E and AUP1. Interacts with YOD1. Interacts (via N-terminus) with UBQLN2 (via C-terminus). Interacts with PNPLA2 and UBAC2. Interacts with ZFAND2B; probably through VCP. Interacts with LMBR1L. As to expression, broadly expressed, with highest levels in brain.

The protein resides in the cytoplasm. Its subcellular location is the lipid droplet. It localises to the endoplasmic reticulum. Functionally, plays an important role in endoplasmic reticulum-associated degradation (ERAD) that mediates ubiquitin-dependent degradation of misfolded endoplasmic reticulum proteins. By controlling the steady-state expression of the IGF1R receptor, indirectly regulates the insulin-like growth factor receptor signaling pathway. Involved in inhibition of lipid droplet degradation by binding to phospholipase PNPL2 and inhibiting its activity by promoting dissociation of PNPL2 from its endogenous activator, ABHD5 which inhibits the rate of triacylglycerol hydrolysis. Involved in stress granule disassembly: associates with ubiquitinated G3BP1 in response to heat shock, thereby promoting interaction between ubiquitinated G3BP1 and VCP, followed by G3BP1 extraction from stress granules and stress granule disassembly. This chain is FAS-associated factor 2, found in Homo sapiens (Human).